The sequence spans 154 residues: Acidic phospholipase A2 2 (154 aa).

The first 19 residues, 1–19 (MHPAHLLVPLGVCVSLLGA), serve as a signal peptide directing secretion. Positions 20 to 27 (ARIPPLPL) are excised as a propeptide. Intrachain disulfides connect Cys38-Cys104, Cys54-Cys153, Cys56-Cys72, Cys71-Cys132, Cys78-Cys125, Cys88-Cys118, and Cys111-Cys123. Ca(2+) contacts are provided by Tyr55, Gly57, and Gly59. His75 is a catalytic residue. Asp76 provides a ligand contact to Ca(2+). The active site involves Asp126.

It belongs to the phospholipase A2 family. Group I subfamily. D49 sub-subfamily. Monomer. It depends on Ca(2+) as a cofactor. In terms of tissue distribution, expressed by the venom gland.

It is found in the secreted. The catalysed reaction is a 1,2-diacyl-sn-glycero-3-phosphocholine + H2O = a 1-acyl-sn-glycero-3-phosphocholine + a fatty acid + H(+). Its function is as follows. Snake venom phospholipase A2 (PLA2) that shows moderate enzymatic activity and exhibits procoagulant activity. PLA2 catalyzes the calcium-dependent hydrolysis of the 2-acyl groups in 3-sn-phosphoglycerides. The sequence is that of Acidic phospholipase A2 2 from Pseudonaja textilis (Eastern brown snake).